The primary structure comprises 208 residues: Uracil phosphoribosyltransferase (208 aa).

Residues Arg78, Arg103, and 130 to 138 (DPMFATGGT) contribute to the 5-phospho-alpha-D-ribose 1-diphosphate site. Residues Ile193 and 198 to 200 (GDA) contribute to the uracil site. Asp199 is a binding site for 5-phospho-alpha-D-ribose 1-diphosphate.

This sequence belongs to the UPRTase family. It depends on Mg(2+) as a cofactor.

It carries out the reaction UMP + diphosphate = 5-phospho-alpha-D-ribose 1-diphosphate + uracil. It participates in pyrimidine metabolism; UMP biosynthesis via salvage pathway; UMP from uracil: step 1/1. With respect to regulation, allosterically activated by GTP. Functionally, catalyzes the conversion of uracil and 5-phospho-alpha-D-ribose 1-diphosphate (PRPP) to UMP and diphosphate. The protein is Uracil phosphoribosyltransferase of Campylobacter jejuni subsp. jejuni serotype O:6 (strain 81116 / NCTC 11828).